The chain runs to 725 residues: DNA replication licensing factor MCM7 (725 aa).

The region spanning 333-538 is the MCM domain; the sequence is IYNKLARSLA…METDLEMARH (206 aa). 383-390 is a binding site for ATP; sequence GDPGVAKS. The Arginine finger motif lies at 515–518; that stretch reads SRFD.

This sequence belongs to the MCM family. As to quaternary structure, component of the minichromosome maintenance (MCM) complex, a heterotetramer composed of MCM2, MCM3, MCM4, MCM5, MCM6 and MCM7.

It is found in the nucleus. The enzyme catalyses ATP + H2O = ADP + phosphate + H(+). In terms of biological role, probable component of the MCM2-7 complex (MCM complex) that may function as a DNA helicase and which is essential to undergo a single round of replication initiation and elongation per cell cycle in eukaryotic cells. The polypeptide is DNA replication licensing factor MCM7 (MCM7) (Oryza sativa subsp. indica (Rice)).